The sequence spans 293 residues: ATP synthase gamma chain (293 aa).

The protein belongs to the ATPase gamma chain family. In terms of assembly, F-type ATPases have 2 components, CF(1) - the catalytic core - and CF(0) - the membrane proton channel. CF(1) has five subunits: alpha(3), beta(3), gamma(1), delta(1), epsilon(1). CF(0) has three main subunits: a, b and c.

The protein localises to the cell inner membrane. Its function is as follows. Produces ATP from ADP in the presence of a proton gradient across the membrane. The gamma chain is believed to be important in regulating ATPase activity and the flow of protons through the CF(0) complex. This Beijerinckia indica subsp. indica (strain ATCC 9039 / DSM 1715 / NCIMB 8712) protein is ATP synthase gamma chain.